Reading from the N-terminus, the 360-residue chain is Phospho-N-acetylmuramoyl-pentapeptide-transferase (360 aa).

Residues 1–25 lie on the Periplasmic side of the membrane; the sequence is MLVWLAEHLVKYYSGFNVFSYLTFR. The chain crosses the membrane as a helical span at residues 26–46; the sequence is AIVSLLTALFISLWMGPRMIA. Over 47-71 the chain is Cytoplasmic; sequence RLQKLSFGQVVRNDGPESHFSKRGT. Residues 72-92 traverse the membrane as a helical segment; the sequence is PTMGGIMILTSIVISVLLWAY. Position 93 (Pro93) is a topological domain, periplasmic. The helical transmembrane segment at 94-114 threads the bilayer; it reads SNPYVWCVLVVLIGYGIIGFV. The Cytoplasmic portion of the chain corresponds to 115–131; that stretch reads DDYRKVVRKDTKGLIAR. The helical transmembrane segment at 132–152 threads the bilayer; sequence WKYFWMSVIALGVAFALYLVG. The Periplasmic portion of the chain corresponds to 153-167; the sequence is KDTPATQLVVPFFKD. Residues 168–188 traverse the membrane as a helical segment; that stretch reads VMPQLGLFYILLSYFVIVGTG. Residues 189–198 lie on the Cytoplasmic side of the membrane; it reads NAVNLTDGLD. A helical transmembrane segment spans residues 199-219; the sequence is GLAIMPTVFVAAGFALVAWAT. Topologically, residues 220–235 are periplasmic; sequence GNMNFANYLHIPYLRH. The helical transmembrane segment at 236–256 threads the bilayer; it reads AGELVIVCTAIVGAGLGFLWF. Residues 257-262 lie on the Cytoplasmic side of the membrane; sequence NTYPAQ. The helical transmembrane segment at 263 to 283 threads the bilayer; sequence VFMGDVGSLALGGALGIIAVL. At 284–287 the chain is on the periplasmic side; that stretch reads LRQE. A helical membrane pass occupies residues 288-308; sequence FLLVIMGGVFVVETLSVILQV. Topologically, residues 309–337 are cytoplasmic; it reads GSFKLRGQRIFRMAPIHHHYELKGWPEPR. A helical membrane pass occupies residues 338-358; sequence VIVRFWIISLMLVLIGLATLK. Over 359–360 the chain is Periplasmic; sequence VR.

This sequence belongs to the glycosyltransferase 4 family. MraY subfamily. Requires Mg(2+) as cofactor.

The protein localises to the cell inner membrane. The catalysed reaction is UDP-N-acetyl-alpha-D-muramoyl-L-alanyl-gamma-D-glutamyl-meso-2,6-diaminopimeloyl-D-alanyl-D-alanine + di-trans,octa-cis-undecaprenyl phosphate = di-trans,octa-cis-undecaprenyl diphospho-N-acetyl-alpha-D-muramoyl-L-alanyl-D-glutamyl-meso-2,6-diaminopimeloyl-D-alanyl-D-alanine + UMP. It participates in cell wall biogenesis; peptidoglycan biosynthesis. Catalyzes the initial step of the lipid cycle reactions in the biosynthesis of the cell wall peptidoglycan: transfers peptidoglycan precursor phospho-MurNAc-pentapeptide from UDP-MurNAc-pentapeptide onto the lipid carrier undecaprenyl phosphate, yielding undecaprenyl-pyrophosphoryl-MurNAc-pentapeptide, known as lipid I. The polypeptide is Phospho-N-acetylmuramoyl-pentapeptide-transferase (Salmonella gallinarum (strain 287/91 / NCTC 13346)).